We begin with the raw amino-acid sequence, 362 residues long: MKASILTKLETLVERYEEVQHLLGDPDVIGDQDKFRALSKEYSQLEEVTKCFQAYQQAQDDLAAAEEMAKEDDEEMREMAQEEIKDAKEAIERLADELQILLLPKDPNDDRNCFLEIRAGAGGDEAGIFAGDLFRMYSKYAEKRGWRIEVMSSNEAEHGGYKEMIAKVSGDGAYGVLKFESGGHRVQRVPATESQGRVHTSACTVAVMAEIPEADLPEIKAADLKIDTFRASGAGGQHVNTTDSAIRITHLPTGTVVECQDERSQHKNKAKAMAVLAARIVQAEQERRAAEVSDTRRNLLGSGDRSDRIRTYNYPQGRVSDHRINLTIYRLNEVMEGDLQSLIDPVVQEHQADQLAALAENA.

Q237 is subject to N5-methylglutamine.

Belongs to the prokaryotic/mitochondrial release factor family. In terms of processing, methylated by PrmC. Methylation increases the termination efficiency of RF1.

The protein localises to the cytoplasm. Functionally, peptide chain release factor 1 directs the termination of translation in response to the peptide chain termination codons UAG and UAA. The chain is Peptide chain release factor 1 from Vibrio parahaemolyticus serotype O3:K6 (strain RIMD 2210633).